A 542-amino-acid chain; its full sequence is 4-coumarate--CoA ligase-like 5 (542 aa).

The ATP site is built by Ser204, Ser205, Gly206, Thr207, Thr208, and Lys212. A (E)-4-coumaroyl-AMP-binding site is contributed by Phe262. Arg282 lines the CoA pocket. The interval 284 to 353 (DFIAALRAIE…SVFPNVELVQ (70 aa)) is SBD1. Residues Gly331, Gln353, Gly354, and Thr358 each coordinate (E)-4-coumaroyl-AMP. Residues Gln353, Gly354, Thr358, Asp418, and Arg433 each coordinate ATP. Residues 354 to 397 (GYGLTESSGAVAATVGPEESKAYGSVGKLGSHLQAKIVDPSTGY) form an SBD2 region. The (E)-4-coumaroyl-AMP site is built by Lys435 and Lys439. Lys441 and Gly442 together coordinate CoA. ATP is bound at residue Lys524.

Belongs to the ATP-dependent AMP-binding enzyme family. The cofactor is Mg(2+).

It catalyses the reaction (E)-4-coumarate + ATP + CoA = (E)-4-coumaroyl-CoA + AMP + diphosphate. It carries out the reaction (E)-4-coumarate + ATP + H(+) = (E)-4-coumaroyl-AMP + diphosphate. The enzyme catalyses (E)-4-coumaroyl-AMP + CoA = (E)-4-coumaroyl-CoA + AMP + H(+). Functionally, carboxylate--CoA ligase that may use 4-coumarate as substrate. Follows a two-step reaction mechanism, wherein the carboxylate substrate first undergoes adenylation by ATP, followed by a thioesterification in the presence of CoA to yield the final CoA thioester. The protein is 4-coumarate--CoA ligase-like 5 (4CLL5) of Oryza sativa subsp. japonica (Rice).